Consider the following 501-residue polypeptide: Aldehyde dehydrogenase 1A1 (501 aa).

Residue Ser2 is modified to N-acetylserine. N6-acetyllysine occurs at positions 91 and 128. NAD(+) contacts are provided by residues 167 to 170 (IPWN), 193 to 196 (KPAE), 226 to 227 (GP), and 246 to 247 (GS). Lys252 carries the post-translational modification N6-acetyllysine. Residue Glu269 is the Proton acceptor of the active site. Position 269–271 (269–271 (ELG)) interacts with NAD(+). The active-site Nucleophile is the Cys303. A mediates interaction with PRMT3 region spans residues 336 to 501 (LTPGVSQGPQ…VTIKISQKNS (166 aa)). Thr337 carries the phosphothreonine modification. 349 to 353 (EQYEK) lines the NAD(+) pocket. N6-acetyllysine is present on residues Lys353 and Lys367. 400–402 (EIF) contacts NAD(+). Lys410 carries the N6-acetyllysine modification. Position 413 is a phosphoserine (Ser413). Residues Lys419 and Lys495 each carry the N6-acetyllysine modification.

It belongs to the aldehyde dehydrogenase family. In terms of assembly, homotetramer. Interacts with PRMT3; the interaction is direct, inhibits ALDH1A1 aldehyde dehydrogenase activity and is independent of the methyltransferase activity of PRMT3. In terms of processing, the N-terminus is blocked most probably by acetylation.

The protein localises to the cytoplasm. It localises to the cytosol. The protein resides in the cell projection. Its subcellular location is the axon. It catalyses the reaction an aldehyde + NAD(+) + H2O = a carboxylate + NADH + 2 H(+). It carries out the reaction all-trans-retinal + NAD(+) + H2O = all-trans-retinoate + NADH + 2 H(+). The enzyme catalyses 9-cis-retinal + NAD(+) + H2O = 9-cis-retinoate + NADH + 2 H(+). The catalysed reaction is 11-cis-retinal + NAD(+) + H2O = 11-cis-retinoate + NADH + 2 H(+). It catalyses the reaction 13-cis-retinal + NAD(+) + H2O = 13-cis-retinoate + NADH + 2 H(+). It carries out the reaction 3-deoxyglucosone + NAD(+) + H2O = 2-dehydro-3-deoxy-D-gluconate + NADH + 2 H(+). The enzyme catalyses (E)-4-hydroxynon-2-enal + NAD(+) + H2O = (E)-4-hydroxynon-2-enoate + NADH + 2 H(+). The catalysed reaction is malonaldehyde + NAD(+) + H2O = 3-oxopropanoate + NADH + 2 H(+). It catalyses the reaction hexanal + NAD(+) + H2O = hexanoate + NADH + 2 H(+). It carries out the reaction propanal + NAD(+) + H2O = propanoate + NADH + 2 H(+). The enzyme catalyses acetaldehyde + NAD(+) + H2O = acetate + NADH + 2 H(+). The catalysed reaction is benzaldehyde + NAD(+) + H2O = benzoate + NADH + 2 H(+). It catalyses the reaction 4-aminobutanal + NAD(+) + H2O = 4-aminobutanoate + NADH + 2 H(+). The protein operates within cofactor metabolism; retinol metabolism. Its activity is regulated as follows. Inhibited by duocarmycin analogs. Cytosolic dehydrogenase that catalyzes the irreversible oxidation of a wide range of aldehydes to their corresponding carboxylic acid. Functions downstream of retinol dehydrogenases and catalyzes the oxidation of retinaldehyde into retinoic acid, the second step in the oxidation of retinol/vitamin A into retinoic acid. This pathway is crucial to control the levels of retinol and retinoic acid, two important molecules which excess can be teratogenic and cytotoxic. Also oxidizes aldehydes resulting from lipid peroxidation like (E)-4-hydroxynon-2-enal/HNE, malonaldehyde and hexanal that form protein adducts and are highly cytotoxic. By participating for instance to the clearance of (E)-4-hydroxynon-2-enal/HNE in the lens epithelium prevents the formation of HNE-protein adducts and lens opacification. Also functions downstream of fructosamine-3-kinase in the fructosamine degradation pathway by catalyzing the oxidation of 3-deoxyglucosone, the carbohydrate product of fructosamine 3-phosphate decomposition, which is itself a potent glycating agent that may react with lysine and arginine side-chains of proteins. Also has an aminobutyraldehyde dehydrogenase activity and is probably part of an alternative pathway for the biosynthesis of GABA/4-aminobutanoate in midbrain, thereby playing a role in GABAergic synaptic transmission. This Ovis aries (Sheep) protein is Aldehyde dehydrogenase 1A1.